We begin with the raw amino-acid sequence, 2045 residues long: Host cell factor 1 (2045 aa).

Alanine 2 is modified (N-acetylalanine). The residue at position 6 (serine 6) is a Phosphoserine. Kelch repeat units lie at residues 44 to 89, 93 to 140, 148 to 194, 217 to 265, and 266 to 313; these read LIVV…GFVC, RLLV…RLGH, KCYL…ITYG, KLVI…TIGN, and KMYV…LMDT. Glycyl lysine isopeptide (Lys-Gly) (interchain with G-Cter in ubiquitin) cross-links involve residues lysine 105, lysine 163, and lysine 244. Lysine 282 is covalently cross-linked (Glycyl lysine isopeptide (Lys-Gly) (interchain with G-Cter in SUMO2)). The residue at position 288 (lysine 288) is an N6-acetyllysine. Lysine 363 participates in a covalent cross-link: Glycyl lysine isopeptide (Lys-Gly) (interchain with G-Cter in ubiquitin). Residues 366 to 457 form the Fibronectin type-III 1 domain; sequence PPARVQLVRA…VPQAATAPPS (92 aa). A disordered region spans residues 407–434; that stretch reads ATATSPTPNPVPSVPANPPKSPAPAAAA. Serine 411 carries the phosphoserine modification. Residues 413-428 show a composition bias toward pro residues; it reads TPNPVPSVPANPPKSP. The tract at residues 500–550 is required for interaction with OGT; that stretch reads LVTMRPASQAGKAPVTVTSLPASVRMVVPTQSAQGTVIGSNPQMSGMAALA. Omega-N-methylarginine occurs at positions 504 and 524. Residues serine 598, serine 666, and serine 669 each carry the phosphoserine modification. The tract at residues 610–722 is interaction with SIN3A; it reads LKTAAAQVGT…KGPLPAGTIL (113 aa). The segment at 750-902 is interaction with ZBTB17; the sequence is ILGISSVSPS…SLAGAGAHST (153 aa). Lysine 813 bears the N6-acetyllysine mark. The segment at 813–912 is interaction with GABP2; that stretch reads KIITAVPKIA…SASLATPITT (100 aa). HCF repeat repeat units follow at residues 1010 to 1035, 1072 to 1097, and 1101 to 1126; these read TLVC…TVVA, VRVC…ATSN, and QHGC…AMSS. The stretch at 1157–1182 is one HCF repeat 4; degenerate repeat; sequence VQGTVKPQCQTQQTNMTTTTMTVQAT. Serine 1204 carries the post-translational modification Phosphoserine. At arginine 1216 the chain carries Asymmetric dimethylarginine. 4 disordered regions span residues 1219 to 1242, 1302 to 1375, 1444 to 1475, and 1494 to 1525; these read LSGP…YTTN, PCET…TSTG, TVTS…STNI, and TTVT…QLPP. A Phosphoserine modification is found at serine 1223. 2 HCF repeat repeats span residues 1295 to 1320 and 1323 to 1348; these read TQVC…SNAG and QRVC…ATSN. Residues 1308 to 1321 are compositionally biased toward low complexity; that stretch reads TGTTNTATTSNAGS. The HCF repeat 7; degenerate repeat unit spans residues 1358–1383; that stretch reads QQPASGHPCETHQTTSTGTTMSVSVG. One copy of the HCF repeat 8 repeat lies at 1423–1448; sequence QRVCSNPPCETHETGTTHTATTVTSN. Residue threonine 1500 is modified to Phosphothreonine. Residues 1502 to 1511 are compositionally biased toward pro residues; that stretch reads VPGPSVPPPE. A phosphoserine mark is found at serine 1506, serine 1516, and serine 1781. Fibronectin type-III domains lie at 1808–1898 and 1900–2016; these read PPPP…TCLP and FPGA…TSKD. Residues lysine 1817 and lysine 1818 each participate in a glycyl lysine isopeptide (Lys-Gly) (interchain with G-Cter in ubiquitin) cross-link. Serine 1848 is modified (phosphoserine). Residues 2004-2045 form a disordered region; the sequence is ATQVRWLQETSKDSSGTKPASKRPMSSPEMKSAPKKSKADGQ. At lysine 2015 the chain carries N6-acetyllysine. A Glycyl lysine isopeptide (Lys-Gly) (interchain with G-Cter in SUMO2) cross-link involves residue lysine 2034.

In terms of assembly, composed predominantly of six polypeptides ranging from 110 to 150 kDa and a minor 300 kDa polypeptide. The majority of N- and C-terminal cleavage products remain tightly, albeit non-covalently, associated. Interacts with POU2F1, CREB3, ZBTB17, EGR2, E2F4, CREBZF, SP1, GABP2, Sin3 HDAC complex (SIN3A, HDAC1, HDAC2, SUDS3), SAP30, SIN3B and FHL2. Component of a MLL1 complex, composed of at least the core components KMT2A/MLL1, ASH2L, HCFC1, WDR5 and RBBP5, as well as the facultative components BACC1, CHD8, DPY30, E2F6, HCFC2, HSP70, INO80C, KANSL1, LAS1L, MAX, MCRS1, MEN1, MGA, KAT8, PELP1, PHF20, PRP31, RING2, RUVBL1, RUVBL2, SENP3, TAF1, TAF4, TAF6, TAF7, TAF9 and TEX10. Component of a THAP1/THAP3-HCFC1-OGT complex that is required for the regulation of the transcriptional activity of RRM1. Interacts directly with THAP3 (via its HBM). Interacts (via the Kelch-repeat domain) with THAP1 (via the HBM); the interaction recruits HCHC1 to the RRM1. Interacts with THAP7 and THAP11 (via the HMB). Interacts directly with OGT; the interaction, which requires the HCFC1 cleavage site domain, glycosylates and promotes the proteolytic processing of HCFC1 and retains OGT in the nucleus. Component of the SET1 complex, at least composed of the catalytic subunit (SETD1A or SETD1B), WDR5, WDR82, RBBP5, ASH2L, CXXC1, HCFC1 and DPY30. Component of the NSL complex at least composed of MOF/KAT8, KANSL1, KANSL2, KANSL3, MCRS1, PHF20, OGT1/OGT, WDR5 and HCFC1. Component of a complex at least composed of ZNF335, HCFC1, CCAR2, EMSY, MKI67, RBBP5, ASH2L and WDR5; the complex is formed as a result of interactions between components of a nuclear receptor-mediated transcription complex and a histone methylation complex. Within the complex interacts with ZNF335. Interacts with TET2 and TET3. Interacts with HCFC1R1. Interacts with THAP11. Interacts (via Kelch domain) with KMT2E (via HBM motif). Interacts with E2F1. Accessory scaffold component of the polycomb repressive deubiquitinase (PR-DUB) complex, at least composed of BAP1, one of ASXL1, ASXL2 or (probably) ASXL3 and one of MBD5 or MBD6; the PR-DUB core associates with a number of accessory proteins, including FOXK1, FOXK2, KDM1B, HCFC1, YY1 and OGT. Interacts with YY1 (via Gly-rich region); the interaction is direct. Interacts with BAP1 (via HBM-like motif). In terms of processing, proteolytically cleaved at one or several PPCE--THET sites within the HCF repeats. Further cleavage of the primary N- and C-terminal chains results in a 'trimming' and accumulation of the smaller chains. Cleavage is promoted by O-glycosylation. Post-translationally, O-glycosylated. GlcNAcylation by OGT promotes proteolytic processing. Ubiquitinated. Lys-1817 and Lys-1818 are ubiquitinated both via 'Lys-48'- and 'Lys-63'-linked polyubiquitin chains. BAP1 mediated deubiquitination of 'Lys-48'-linked polyubiquitin chains; deubiquitination by BAP1 does not seem to stabilize the protein. In terms of tissue distribution, expressed in liver, pituitary gland, skeletal muscle, kidney, eye and brain (at protein level). Also observed at low level in heart, spleen and lung.

Its subcellular location is the nucleus. The protein localises to the cytoplasm. Transcriptional coregulator. Serves as a scaffold protein, bridging interactions between transcription factors, including THAP11 and ZNF143, and transcriptional coregulators. Involved in control of the cell cycle. Also antagonizes transactivation by ZBTB17 and GABP2; represses ZBTB17 activation of the p15(INK4b) promoter and inhibits its ability to recruit p300. Coactivator for EGR2 and GABP2. Tethers the chromatin modifying Set1/Ash2 histone H3 'Lys-4' methyltransferase (H3K4me) and Sin3 histone deacetylase (HDAC) complexes (involved in the activation and repression of transcription respectively) together. As part of the NSL complex it may be involved in acetylation of nucleosomal histone H4 on several lysine residues. Recruits KMT2E to E2F1 responsive promoters promoting transcriptional activation and thereby facilitates G1 to S phase transition. Modulates expression of homeobox protein PDX1, perhaps acting in concert with transcription factor E2F1, thereby regulating pancreatic beta-cell growth and glucose-stimulated insulin secretion. May negatively modulate transcriptional activity of FOXO3. The sequence is that of Host cell factor 1 from Mus musculus (Mouse).